A 367-amino-acid polypeptide reads, in one-letter code: Peptide chain release factor 1 (367 aa).

Residue Gln238 is modified to N5-methylglutamine.

This sequence belongs to the prokaryotic/mitochondrial release factor family. Methylated by PrmC. Methylation increases the termination efficiency of RF1.

The protein resides in the cytoplasm. In terms of biological role, peptide chain release factor 1 directs the termination of translation in response to the peptide chain termination codons UAG and UAA. The polypeptide is Peptide chain release factor 1 (Dictyoglomus thermophilum (strain ATCC 35947 / DSM 3960 / H-6-12)).